The chain runs to 213 residues: NADH dehydrogenase [ubiquinone] iron-sulfur protein 7, mitochondrial (213 aa).

The transit peptide at 1 to 38 directs the protein to the mitochondrion; it reads MAVLSAPGLRGFRILGLRSSVGPAVQARGVHQSVATDG. A disordered region spans residues 31 to 53; sequence HQSVATDGPSSTQPALPKARAVA. The span at 33 to 44 shows a compositional bias: polar residues; the sequence is SVATDGPSSTQP. 2 residues coordinate [4Fe-4S] cluster: Cys88 and Cys89. A Hydroxyarginine modification is found at Arg111. Positions 153 and 183 each coordinate [4Fe-4S] cluster.

The protein belongs to the complex I 20 kDa subunit family. Core subunit of respiratory chain NADH dehydrogenase (Complex I) which is composed of 45 different subunits. This is a component of the iron-sulfur (IP) fragment of the enzyme. It depends on [4Fe-4S] cluster as a cofactor. Post-translationally, hydroxylated at Arg-111 by NDUFAF5 early in the pathway of assembly of complex I, before the formation of the juncture between peripheral and membrane arms.

It is found in the mitochondrion inner membrane. The catalysed reaction is a ubiquinone + NADH + 5 H(+)(in) = a ubiquinol + NAD(+) + 4 H(+)(out). Its function is as follows. Core subunit of the mitochondrial membrane respiratory chain NADH dehydrogenase (Complex I) which catalyzes electron transfer from NADH through the respiratory chain, using ubiquinone as an electron acceptor. Essential for the catalytic activity of complex I. In Homo sapiens (Human), this protein is NADH dehydrogenase [ubiquinone] iron-sulfur protein 7, mitochondrial (NDUFS7).